We begin with the raw amino-acid sequence, 150 residues long: Large ribosomal subunit protein uL13 (150 aa).

The interval 128–150 is disordered; it reads GSDHPHSAQEPKILSLNSESVTK.

This sequence belongs to the universal ribosomal protein uL13 family. Part of the 50S ribosomal subunit.

In terms of biological role, this protein is one of the early assembly proteins of the 50S ribosomal subunit, although it is not seen to bind rRNA by itself. It is important during the early stages of 50S assembly. The protein is Large ribosomal subunit protein uL13 of Prochlorococcus marinus (strain NATL1A).